Consider the following 126-residue polypeptide: Arginine decarboxylase proenzyme (126 aa).

The active-site Schiff-base intermediate with substrate; via pyruvic acid is Ser-74. At Ser-74 the chain carries Pyruvic acid (Ser); by autocatalysis. Catalysis depends on His-79, which acts as the Proton acceptor; for processing activity. Residue Cys-94 is the Proton donor; for catalytic activity of the active site.

This sequence belongs to the prokaryotic AdoMetDC family. Type 1 subfamily. Heterooctamer of four alpha and four beta chains arranged as a tetramer of alpha/beta heterodimers. It depends on pyruvate as a cofactor. Post-translationally, is synthesized initially as an inactive proenzyme. Formation of the active enzyme involves a self-maturation process in which the active site pyruvoyl group is generated from an internal serine residue via an autocatalytic post-translational modification. Two non-identical subunits are generated from the proenzyme in this reaction, and the pyruvate is formed at the N-terminus of the alpha chain, which is derived from the carboxyl end of the proenzyme. The post-translation cleavage follows an unusual pathway, termed non-hydrolytic serinolysis, in which the side chain hydroxyl group of the serine supplies its oxygen atom to form the C-terminus of the beta chain, while the remainder of the serine residue undergoes an oxidative deamination to produce ammonia and the pyruvoyl group blocking the N-terminus of the alpha chain.

It carries out the reaction L-arginine + H(+) = agmatine + CO2. Its pathway is amine and polyamine biosynthesis; agmatine biosynthesis; agmatine from L-arginine: step 1/1. In terms of biological role, specifically catalyzes the decarboxylation of L-arginine to agmatine. Has no S-adenosylmethionine decarboxylase (AdoMetDC) activity. In Pyrobaculum neutrophilum (strain DSM 2338 / JCM 9278 / NBRC 100436 / V24Sta) (Thermoproteus neutrophilus), this protein is Arginine decarboxylase proenzyme.